A 139-amino-acid polypeptide reads, in one-letter code: D-ribose pyranase (139 aa).

The active-site Proton donor is H20. Substrate is bound by residues D28, H106, and 128 to 130; that span reads YAN.

This sequence belongs to the RbsD / FucU family. RbsD subfamily. In terms of assembly, homodecamer.

It is found in the cytoplasm. The catalysed reaction is beta-D-ribopyranose = beta-D-ribofuranose. The protein operates within carbohydrate metabolism; D-ribose degradation; D-ribose 5-phosphate from beta-D-ribopyranose: step 1/2. Catalyzes the interconversion of beta-pyran and beta-furan forms of D-ribose. The chain is D-ribose pyranase from Haemophilus influenzae (strain 86-028NP).